The sequence spans 357 residues: Chorismate synthase (357 aa).

Residue arginine 47 coordinates NADP(+). Residues 123–125, glycine 281, 296–300, and arginine 324 each bind FMN; these read RAS and KPTSS.

The protein belongs to the chorismate synthase family. As to quaternary structure, homotetramer. It depends on FMNH2 as a cofactor.

The enzyme catalyses 5-O-(1-carboxyvinyl)-3-phosphoshikimate = chorismate + phosphate. It functions in the pathway metabolic intermediate biosynthesis; chorismate biosynthesis; chorismate from D-erythrose 4-phosphate and phosphoenolpyruvate: step 7/7. Its function is as follows. Catalyzes the anti-1,4-elimination of the C-3 phosphate and the C-6 proR hydrogen from 5-enolpyruvylshikimate-3-phosphate (EPSP) to yield chorismate, which is the branch point compound that serves as the starting substrate for the three terminal pathways of aromatic amino acid biosynthesis. This reaction introduces a second double bond into the aromatic ring system. The protein is Chorismate synthase of Chlamydia trachomatis serovar L2 (strain ATCC VR-902B / DSM 19102 / 434/Bu).